The following is a 232-amino-acid chain: Large ribosomal subunit protein uL1 (232 aa).

This sequence belongs to the universal ribosomal protein uL1 family. In terms of assembly, part of the 50S ribosomal subunit.

Its function is as follows. Binds directly to 23S rRNA. The L1 stalk is quite mobile in the ribosome, and is involved in E site tRNA release. In terms of biological role, protein L1 is also a translational repressor protein, it controls the translation of the L11 operon by binding to its mRNA. This is Large ribosomal subunit protein uL1 from Pelotomaculum thermopropionicum (strain DSM 13744 / JCM 10971 / SI).